A 385-amino-acid polypeptide reads, in one-letter code: 1-deoxy-D-xylulose 5-phosphate reductoisomerase 1 (385 aa).

NADPH-binding residues include Thr11, Gly12, Ser13, Ile14, Asn39, and Asn122. Lys123 provides a ligand contact to 1-deoxy-D-xylulose 5-phosphate. An NADPH-binding site is contributed by Glu124. Asp148 is a Mn(2+) binding site. Positions 149, 150, 174, and 197 each coordinate 1-deoxy-D-xylulose 5-phosphate. Residue Glu150 coordinates Mn(2+). Residue Gly203 coordinates NADPH. Residues Ser210, Asn215, Lys216, and Glu219 each contribute to the 1-deoxy-D-xylulose 5-phosphate site. A Mn(2+)-binding site is contributed by Glu219.

This sequence belongs to the DXR family. Mg(2+) serves as cofactor. Mn(2+) is required as a cofactor.

It carries out the reaction 2-C-methyl-D-erythritol 4-phosphate + NADP(+) = 1-deoxy-D-xylulose 5-phosphate + NADPH + H(+). Its pathway is isoprenoid biosynthesis; isopentenyl diphosphate biosynthesis via DXP pathway; isopentenyl diphosphate from 1-deoxy-D-xylulose 5-phosphate: step 1/6. In terms of biological role, catalyzes the NADPH-dependent rearrangement and reduction of 1-deoxy-D-xylulose-5-phosphate (DXP) to 2-C-methyl-D-erythritol 4-phosphate (MEP). This Bacillus cereus (strain ATCC 14579 / DSM 31 / CCUG 7414 / JCM 2152 / NBRC 15305 / NCIMB 9373 / NCTC 2599 / NRRL B-3711) protein is 1-deoxy-D-xylulose 5-phosphate reductoisomerase 1.